We begin with the raw amino-acid sequence, 611 residues long: TANK-binding kinase 1-binding protein 1 (611 aa).

The interval 1-280 is homodimerization; it reads MESMFEDDIS…QDLASNQSEC (280 aa). Positions 48–162 form a coiled coil; it reads YGDIKERLGG…ALVETHLRQI (115 aa). A Phosphoserine modification is found at serine 184. Residues 218-277 adopt a coiled-coil conformation; sequence TSVSVSELERRRLEEALEAAQGEARGAQLREEQLQAECERLQGELKQLQETRAQDLASNQ. Residues 281–330 form an interaction with TBK1 and IKBKE region; it reads DMAWVKRVGDDQVNLALAYTELTEELGRLRELSSLQGRILRTLLQEQARN. A disordered region spans residues 328-437; that stretch reads ARNAGQRHSP…PPPPPGERTL (110 aa). A compositionally biased stretch (pro residues) spans 346–361; that stretch reads PACPSPSPPARPPPCA. The segment covering 362-372 has biased composition (low complexity); that stretch reads PCQSPAAQRRS. Residues serine 365, serine 372, serine 379, serine 385, serine 400, and serine 415 each carry the phosphoserine modification. Residues 389–406 are compositionally biased toward pro residues; the sequence is PSCPSPVPQRRSPVPPSC. The span at 416–433 shows a compositional bias: pro residues; that stretch reads PVPPSCPAPQPRPPPPPG. A phosphoserine mark is found at serine 500 and serine 530. The segment at 579–605 adopts a UBZ1-type zinc-finger fold; it reads IRSCPLCQLGFPVGYPDDALIKHIDSH. Cysteine 582, cysteine 585, histidine 601, and histidine 605 together coordinate Zn(2+).

Homodimer. May form a heterodimer with NAP1. Interacts with TKB1 and IKBKE. Weakly interacts with DDX3X.

In terms of biological role, adapter protein which constitutively binds TBK1 and IKBKE playing a role in antiviral innate immunity. Essential for the efficient induction of IRF-dependent transcription following infection with Sendai virus. In Mus musculus (Mouse), this protein is TANK-binding kinase 1-binding protein 1.